We begin with the raw amino-acid sequence, 333 residues long: Lipoyl synthase (333 aa).

Polar residues predominate over residues 1–15 (MSTLVESPVPSNDSQ). The disordered stretch occupies residues 1–34 (MSTLVESPVPSNDSQAAAPAAYDPTQKQKSQAKT). The [4Fe-4S] cluster site is built by C80, C85, C91, C106, C110, C113, and S320. The Radical SAM core domain occupies 91–309 (CFGKGTATFM…EREAYAMGFT (219 aa)).

The protein belongs to the radical SAM superfamily. Lipoyl synthase family. Requires [4Fe-4S] cluster as cofactor.

The protein localises to the cytoplasm. The enzyme catalyses [[Fe-S] cluster scaffold protein carrying a second [4Fe-4S](2+) cluster] + N(6)-octanoyl-L-lysyl-[protein] + 2 oxidized [2Fe-2S]-[ferredoxin] + 2 S-adenosyl-L-methionine + 4 H(+) = [[Fe-S] cluster scaffold protein] + N(6)-[(R)-dihydrolipoyl]-L-lysyl-[protein] + 4 Fe(3+) + 2 hydrogen sulfide + 2 5'-deoxyadenosine + 2 L-methionine + 2 reduced [2Fe-2S]-[ferredoxin]. The protein operates within protein modification; protein lipoylation via endogenous pathway; protein N(6)-(lipoyl)lysine from octanoyl-[acyl-carrier-protein]: step 2/2. Its function is as follows. Catalyzes the radical-mediated insertion of two sulfur atoms into the C-6 and C-8 positions of the octanoyl moiety bound to the lipoyl domains of lipoate-dependent enzymes, thereby converting the octanoylated domains into lipoylated derivatives. This is Lipoyl synthase from Bordetella parapertussis (strain 12822 / ATCC BAA-587 / NCTC 13253).